The primary structure comprises 171 residues: 3-hydroxydecanoyl-[acyl-carrier-protein] dehydratase (171 aa).

The active site involves H70.

Belongs to the thioester dehydratase family. FabA subfamily. In terms of assembly, homodimer.

It is found in the cytoplasm. It carries out the reaction a (3R)-hydroxyacyl-[ACP] = a (2E)-enoyl-[ACP] + H2O. The catalysed reaction is (3R)-hydroxydecanoyl-[ACP] = (2E)-decenoyl-[ACP] + H2O. The enzyme catalyses (2E)-decenoyl-[ACP] = (3Z)-decenoyl-[ACP]. It functions in the pathway lipid metabolism; fatty acid biosynthesis. Necessary for the introduction of cis unsaturation into fatty acids. Catalyzes the dehydration of (3R)-3-hydroxydecanoyl-ACP to E-(2)-decenoyl-ACP and then its isomerization to Z-(3)-decenoyl-ACP. Can catalyze the dehydratase reaction for beta-hydroxyacyl-ACPs with saturated chain lengths up to 16:0, being most active on intermediate chain length. The protein is 3-hydroxydecanoyl-[acyl-carrier-protein] dehydratase of Pseudomonas fluorescens (strain SBW25).